Reading from the N-terminus, the 544-residue chain is Chaperonin GroEL (544 aa).

Residues 29–32, 86–90, G413, 476–478, and D492 each bind ATP; these read TLGP, DGTTT, and NAA.

Belongs to the chaperonin (HSP60) family. As to quaternary structure, forms a cylinder of 14 subunits composed of two heptameric rings stacked back-to-back. Interacts with the co-chaperonin GroES.

The protein resides in the cytoplasm. It carries out the reaction ATP + H2O + a folded polypeptide = ADP + phosphate + an unfolded polypeptide.. Together with its co-chaperonin GroES, plays an essential role in assisting protein folding. The GroEL-GroES system forms a nano-cage that allows encapsulation of the non-native substrate proteins and provides a physical environment optimized to promote and accelerate protein folding. This Bacillus mycoides (strain KBAB4) (Bacillus weihenstephanensis) protein is Chaperonin GroEL.